The primary structure comprises 235 residues: Small ribosomal subunit protein uS3 (235 aa).

One can recognise a KH type-2 domain in the interval 39–107 (IREILHKELK…DVVINIVEIR (69 aa)). Residues 215–235 (QDKRMAESDGGGSSRPRRDAA) are disordered.

Belongs to the universal ribosomal protein uS3 family. In terms of assembly, part of the 30S ribosomal subunit. Forms a tight complex with proteins S10 and S14.

Functionally, binds the lower part of the 30S subunit head. Binds mRNA in the 70S ribosome, positioning it for translation. The polypeptide is Small ribosomal subunit protein uS3 (Rhodopseudomonas palustris (strain TIE-1)).